Consider the following 257-residue polypeptide: 4-diphosphocytidyl-2-C-methyl-D-erythritol kinase (257 aa).

Lysine 8 is a catalytic residue. Proline 91–alanine 101 serves as a coordination point for ATP. The active site involves aspartate 131.

Belongs to the GHMP kinase family. IspE subfamily.

The enzyme catalyses 4-CDP-2-C-methyl-D-erythritol + ATP = 4-CDP-2-C-methyl-D-erythritol 2-phosphate + ADP + H(+). It participates in isoprenoid biosynthesis; isopentenyl diphosphate biosynthesis via DXP pathway; isopentenyl diphosphate from 1-deoxy-D-xylulose 5-phosphate: step 3/6. Its function is as follows. Catalyzes the phosphorylation of the position 2 hydroxy group of 4-diphosphocytidyl-2C-methyl-D-erythritol. The protein is 4-diphosphocytidyl-2-C-methyl-D-erythritol kinase of Petrotoga mobilis (strain DSM 10674 / SJ95).